The following is an 806-amino-acid chain: Ent-atiserene synthase KSL4, chloroplastic (806 aa).

The transit peptide at 1-75 (MGIVALILIK…AKLFKKNEVC (75 aa)) directs the protein to the chloroplast. A disordered region spans residues 33–56 (ASLAGSGLPKTTPPKTASLQSHSP). Polar residues predominate over residues 45–55 (PPKTASLQSHS). Positions 556, 560, 700, and 708 each coordinate Mg(2+). The short motif at 556–560 (DDLFD) is the DDXXD motif element.

Belongs to the terpene synthase family. Mg(2+) serves as cofactor. Highly expressed in leaves, and, at low levels, in roots, stems and flowers.

Its subcellular location is the plastid. It is found in the chloroplast. The enzyme catalyses ent-copalyl diphosphate = ent-atiserene + diphosphate. The protein operates within secondary metabolite biosynthesis; terpenoid biosynthesis. Its function is as follows. Involved in the biosynthesis of ent-kaurene diterpenoids natural products such as oridonin, miltiradiene, eriocalyxin B and nezukol, known to exhibit antitumor, anti-inflammatory and antibacterial activities. Catalyzes the conversion of ent-copalyl diphosphate (ent-CPP) to ent-atiserene. This chain is Ent-atiserene synthase KSL4, chloroplastic, found in Isodon rubescens (Rabdosia rubescens).